The primary structure comprises 284 residues: 4-diphosphocytidyl-2-C-methyl-D-erythritol kinase (284 aa).

Lysine 14 is an active-site residue. 98 to 108 (PMGGGLGGGSS) provides a ligand contact to ATP. Residue aspartate 140 is part of the active site.

The protein belongs to the GHMP kinase family. IspE subfamily.

It catalyses the reaction 4-CDP-2-C-methyl-D-erythritol + ATP = 4-CDP-2-C-methyl-D-erythritol 2-phosphate + ADP + H(+). Its pathway is isoprenoid biosynthesis; isopentenyl diphosphate biosynthesis via DXP pathway; isopentenyl diphosphate from 1-deoxy-D-xylulose 5-phosphate: step 3/6. Functionally, catalyzes the phosphorylation of the position 2 hydroxy group of 4-diphosphocytidyl-2C-methyl-D-erythritol. This Shewanella pealeana (strain ATCC 700345 / ANG-SQ1) protein is 4-diphosphocytidyl-2-C-methyl-D-erythritol kinase.